The chain runs to 102 residues: Large ribosomal subunit protein uL24 (102 aa).

The protein belongs to the universal ribosomal protein uL24 family. In terms of assembly, part of the 50S ribosomal subunit.

Its function is as follows. One of two assembly initiator proteins, it binds directly to the 5'-end of the 23S rRNA, where it nucleates assembly of the 50S subunit. Functionally, one of the proteins that surrounds the polypeptide exit tunnel on the outside of the subunit. This Ralstonia pickettii (strain 12J) protein is Large ribosomal subunit protein uL24.